The sequence spans 817 residues: Rho GTPase-activating protein gacII (817 aa).

The Rho-GAP domain maps to 20 to 204 (TTIVKIGTPK…TLIEEFQYIS (185 aa)). Positions 238–298 (EDYLIAKANT…SQTYVDIIDI (61 aa)) constitute an SH3 domain. The segment covering 318-339 (ASTILHTPPTSSSSSSSSSSSS) has biased composition (low complexity). Disordered stretches follow at residues 318–638 (ASTI…NIPV), 691–771 (LGGQ…QQQQ), and 783–817 (LPPQ…FNKN). Residues 340–358 (ILLTDNQPKLCSSTPRINN) show a composition bias toward polar residues. Over residues 359–391 (SPSSFSPSLSSTTPQLLVQQSPRQSPRQIPSIS) the composition is skewed to low complexity. Over residues 396 to 438 (PNNTNQPSFGHGTLQRTSTGYFSSKPLSISQPINMSKPTNMSP) the composition is skewed to polar residues. Residues 461–471 (PPLPTKPPPLT) show a composition bias toward pro residues. A compositionally biased stretch (low complexity) spans 472-498 (IPSSSSLPTTPIKQQPQQPIQQPLTPQ). Polar residues predominate over residues 509–532 (LSSSVNTANTGNCANILSPNSDRY). 3 stretches are compositionally biased toward low complexity: residues 534–568 (SSRS…SSTS), 577–587 (KSKSSKNSPSK), and 607–624 (ITTT…TIAT). The segment covering 625 to 635 (TPPPPSKPLPN) has biased composition (pro residues). Positions 705–722 (KSQSSYLDNNNLPSRNTN) are enriched in polar residues. Residues 725 to 734 (NLPPRPPPLN) show a composition bias toward pro residues. 2 stretches are compositionally biased toward low complexity: residues 735 to 744 (IPQQQQQYKP) and 752 to 771 (QSPQ…QQQQ). Residues 785–803 (PQNTNLSGKNLQRSSTSML) show a composition bias toward polar residues. A compositionally biased stretch (pro residues) spans 807-817 (LPPPPFSFNKN).

It is found in the cytoplasm. In terms of biological role, rho GTPase-activating protein involved in the signal transduction pathway. The polypeptide is Rho GTPase-activating protein gacII (gacII) (Dictyostelium discoideum (Social amoeba)).